The following is a 494-amino-acid chain: Ubiquitin carboxyl-terminal hydrolase 14 (494 aa).

The Ubiquitin-like domain maps to 4–80; it reads YSVTVKWGKE…MMGSADALPE (77 aa). The residue at position 52 (Thr-52) is a Phosphothreonine. The USP domain occupies 105-483; it reads CGLTNLGNTC…IAYVLLYGPR (379 aa). Cys-114 functions as the Nucleophile in the catalytic mechanism. A phosphoserine mark is found at Ser-143 and Ser-148. Thr-235 is modified (phosphothreonine). A phosphoserine mark is found at Ser-237, Ser-302, and Ser-432. The active-site Proton acceptor is the His-435. Position 449 is an N6-acetyllysine (Lys-449).

This sequence belongs to the peptidase C19 family. USP14/UBP6 subfamily. As to quaternary structure, homodimer (Potential). Associates with the 26S proteasome. Interacts with FANCC, CXCR4 and ERN1. Interacts with TRIM14; this interaction recruits USP14 to cleave ubiquitin chains of CGAS and KDM4D.

The protein localises to the cytoplasm. Its subcellular location is the cell membrane. It carries out the reaction Thiol-dependent hydrolysis of ester, thioester, amide, peptide and isopeptide bonds formed by the C-terminal Gly of ubiquitin (a 76-residue protein attached to proteins as an intracellular targeting signal).. Proteasome-associated deubiquitinase which releases ubiquitin from the proteasome targeted ubiquitinated proteins. Ensures the regeneration of ubiquitin at the proteasome. Is a reversibly associated subunit of the proteasome and a large fraction of proteasome-free protein exists within the cell. Required for the degradation of the chemokine receptor CXCR4 which is critical for CXCL12-induced cell chemotaxis. Also serves as a physiological inhibitor of endoplasmic reticulum-associated degradation (ERAD) under the non-stressed condition by inhibiting the degradation of unfolded endoplasmic reticulum proteins via interaction with ERN1. Indispensable for synaptic development and function at neuromuscular junctions (NMJs). Plays a role in the innate immune defense against viruses by stabilizing the viral DNA sensor CGAS and thus inhibiting its autophagic degradation. Inhibits OPTN-mediated selective autophagic degradation of KDM4D and thereby negatively regulates H3K9me2 and H3K9me3. This Homo sapiens (Human) protein is Ubiquitin carboxyl-terminal hydrolase 14 (USP14).